The sequence spans 998 residues: AKSGRASCKKCGDNIAKESLGLAIMVQSPMFDGKVPHWHHYSCFWKRARVLSQGDIYGYTELRWEDQEMIKKAIETGGAAAGAGGDSKGGKGEMTLNDFAAEYAKSNRSACKGCEQKIEKGQIRISKKSVDVERPQLGMIDRWYHPDCFVSSREELDFLPSYSASQLKGFTILSAEDKDSLKKKLPAVKNEGKRKADEVDGHSAATKKKIKKEKEKESKLEKLLKEQTELIWHIKDELKKVCSTNDLKELLIANKQQVPSGETNIVDRVSDGMAFGALLPCEECSGQFVFKGDAYYCTGDLSAWTKCVAKTQTPNRKDWVTPKEFHEIPYLKKFKFKRHDRAFPPCAAPTPISPPAAPEPKPTVEETFPEGKPLTNTKVLLIGKLSKNKDEVKTLIEGLGGKVAGSAHKANLCISTNKEVKKMSKKMEEVKAANVRVVSDDFLKEVESGKSVQELLSQFGISSWGAEIKQEAVQPTEKQPSSGPVAGKSSGKVKEEKGSNKSEKKMKLTVKGGAAIDPDSELEDSCHVLETGGKIFSATLGLVDITRGTNSYYKLQLIEHDRDSRYWVFRSWGRVGTVIGSKKLEEMSSKEDAIEHFLNLYQDKTGNAWHSPNFTKYPKKFYPLEIDYGQEEDVVKKLSVGAGTKSKLAKPVQELIKLIFDVESMKKAMVEFEIDLQKMPLGKLSKRQIQSAYSILSQVQQAVSESLSEARLLDLSNQFYTLIPHDFGMKKPPLLNNLEYIQAKVQMLDNLLDIEVAYSLLRGGADDGEKDPIDVKYEKIKTDIKVVAKDSEESRIICDYVKNTHADTHNAYDLEVLEIFKIDREGEYQRYKPFKQLHNRQLLWHGSRTTNFAGILSQGLRIAPPEAPVTGYMFGKGIYFADMVSKSANYCHAMPGSPIGLILLGEVALGNMHELKAASQITKLPKGKHSVKGLGRTAPDPSATVQLDGVDVPLGKGTSANISDTSLLYNEYIVYDIAQVNLKYLLKLKFNYKGGMMW.

PARP-type zinc fingers lie at residues 1–78 and 99–189; these read AKSG…ETGG and FAAE…PAVK. Residues cysteine 8, cysteine 11, histidine 40, cysteine 43, cysteine 111, cysteine 114, histidine 145, and cysteine 148 each coordinate Zn(2+). A disordered region spans residues 185–211; sequence LPAVKNEGKRKADEVDGHSAATKKKIK. Positions 190 to 201 are enriched in basic and acidic residues; sequence NEGKRKADEVDG. 2 consecutive short sequence motifs (nuclear localization signal) follow at residues 193–195 and 207–212; these read KRK and KKKIKK. The PADR1 zinc-binding domain maps to 211–345; sequence KKEKEKESKL…FKRHDRAFPP (135 aa). The interval 276–318 is zinc ribbon; the sequence is GALLPCEECSGQFVFKGDAYYCTGDLSAWTKCVAKTQTPNRKD. Zn(2+) is bound by residues cysteine 281, cysteine 284, cysteine 297, and cysteine 307. The span at 348-361 shows a compositional bias: pro residues; sequence APTPISPPAAPEPK. Residues 348–370 form a disordered region; the sequence is APTPISPPAAPEPKPTVEETFPE. Residues 357–507 form an automodification domain region; that stretch reads APEPKPTVEE…GSNKSEKKMK (151 aa). In terms of domain architecture, BRCT spans 369–460; the sequence is PEGKPLTNTK…SVQELLSQFG (92 aa). PolyADP-ribosyl glutamic acid is present on residues glutamate 391, glutamate 397, glutamate 419, glutamate 428, glutamate 429, glutamate 445, glutamate 447, glutamate 454, glutamate 467, glutamate 471, glutamate 477, glutamate 495, glutamate 496, and glutamate 503. The segment at 471 to 510 is disordered; it reads EAVQPTEKQPSSGPVAGKSSGKVKEEKGSNKSEKKMKLTV. Basic and acidic residues predominate over residues 492 to 506; it reads KVKEEKGSNKSEKKM. The WGR domain occupies 525 to 621; sequence SCHVLETGGK…PNFTKYPKKF (97 aa). The 118-residue stretch at 645-762 folds into the PARP alpha-helical domain; sequence KSKLAKPVQE…DIEVAYSLLR (118 aa). The 227-residue stretch at 771-997 folds into the PARP catalytic domain; sequence DPIDVKYEKI…LKFNYKGGMM (227 aa). NAD(+) contacts are provided by residues 845–847, glycine 854, arginine 861, and serine 887; that span reads HGS. The For poly [ADP-ribose] polymerase activity role is filled by glutamate 971.

This sequence belongs to the ARTD/PARP family. As to quaternary structure, homodimer; PARP-type zinc-fingers from separate parp1 molecules form a dimer module that specifically recognizes DNA strand breaks. In terms of processing, poly-ADP-ribosylated on serine, glutamate and aspartate residues by autocatalysis. Auto-ADP-ribosylation on serine takes place following interaction with HPF1. Auto poly-ADP-ribosylation on serine residues promotes its dissociation from chromatin.

It localises to the chromosome. Its subcellular location is the nucleus. The protein localises to the nucleolus. It is found in the cytoplasm. The protein resides in the cytosol. The catalysed reaction is NAD(+) + (ADP-D-ribosyl)n-acceptor = nicotinamide + (ADP-D-ribosyl)n+1-acceptor + H(+).. The enzyme catalyses L-seryl-[protein] + NAD(+) = O-(ADP-D-ribosyl)-L-seryl-[protein] + nicotinamide + H(+). It carries out the reaction L-aspartyl-[protein] + NAD(+) = 4-O-(ADP-D-ribosyl)-L-aspartyl-[protein] + nicotinamide. It catalyses the reaction L-glutamyl-[protein] + NAD(+) = 5-O-(ADP-D-ribosyl)-L-glutamyl-[protein] + nicotinamide. The catalysed reaction is L-tyrosyl-[protein] + NAD(+) = O-(ADP-D-ribosyl)-L-tyrosyl-[protein] + nicotinamide + H(+). The enzyme catalyses L-histidyl-[protein] + NAD(+) = N(tele)-(ADP-D-ribosyl)-L-histidyl-[protein] + nicotinamide + H(+). Its activity is regulated as follows. ADP-ribosyltransferase activity is regulated via an allosteric activation mechanism. In absence of activation signal, parp1 is autoinhibited by the PARP alpha-helical domain (also named HD region), which prevents effective NAD(+)-binding. Activity is highly stimulated by signals, such as DNA strand breaks. Binding to damaged DNA unfolds the PARP alpha-helical domain, relieving autoinhibition. Poly-ADP-ribosyltransferase activity is tightly regulated and parp1 is removed from damaged chromatin following initial poly-ADP-ribosylation of chromatin to avoid prolonged residence (trapping) that has cytotoxic consequences. A number of factors or post-translational modifications (auto-poly-ADP-ribosylation) promote parp1 removal from chromatin. In terms of biological role, poly-ADP-ribosyltransferase that mediates poly-ADP-ribosylation of proteins and plays a key role in DNA repair. Mediates glutamate, aspartate, serine, histidine or tyrosine ADP-ribosylation of proteins: the ADP-D-ribosyl group of NAD(+) is transferred to the acceptor carboxyl group of target residues and further ADP-ribosyl groups are transferred to the 2'-position of the terminal adenosine moiety, building up a polymer with an average chain length of 20-30 units. Serine ADP-ribosylation of proteins constitutes the primary form of ADP-ribosylation of proteins in response to DNA damage. Specificity for the different amino acids is conferred by interacting factors, such as hpf1 and nmnat1. Following interaction with hpf1, catalyzes serine ADP-ribosylation of target proteins; hpf1 confers serine specificity by completing the parp1 active site. Also catalyzes tyrosine ADP-ribosylation of target proteins following interaction with hpf1. Following interaction with nmnat1, catalyzes glutamate and aspartate ADP-ribosylation of target proteins; nmnat1 confers glutamate and aspartate specificity. Parp1 initiates the repair of DNA breaks: recognizes and binds DNA breaks within chromatin and recruits hpf1, licensing serine ADP-ribosylation of target proteins, such as histones (H2BS6ADPr and H3S10ADPr), thereby promoting decompaction of chromatin and the recruitment of repair factors leading to the reparation of DNA strand breaks. In addition to base excision repair (BER) pathway, also involved in double-strand breaks (DSBs) repair. Mediates the poly-ADP-ribosylation of a number of proteins. In addition to proteins, also able to ADP-ribosylate DNA: catalyzes ADP-ribosylation of DNA strand break termini containing terminal phosphates and a 2'-OH group in single- and double-stranded DNA, respectively. Parp1-mediated DNA repair in neurons plays a role in sleep: senses DNA damage in neurons and promotes sleep, facilitating efficient DNA repair. In addition to DNA repair, also involved in other processes, such as transcription regulation, programmed cell death, membrane repair, adipogenesis and innate immunity. Acts as a repressor of transcription: binds to nucleosomes and modulates chromatin structure in a manner similar to histone H1, thereby altering RNA polymerase II. Acts both as a positive and negative regulator of transcription elongation, depending on the context. Poly-ADP-ribose chains generated by parp1 also play a role in poly-ADP-ribose-dependent cell death, a process named parthanatos. Also acts as a negative regulator of the cGAS-STING pathway by mediating poly-ADP-ribosylation and inactivation of cgas. Acts as a negative regulator of adipogenesis by catalyzing poly ADP-ribosylation of histone H2B on 'Glu-35' (H2BE35ADPr). The sequence is that of Poly [ADP-ribose] polymerase 1 (parp1) from Xenopus laevis (African clawed frog).